A 204-amino-acid polypeptide reads, in one-letter code: Urease accessory protein UreG (204 aa).

12–19 contacts GTP; that stretch reads GPVGSGKT.

Belongs to the SIMIBI class G3E GTPase family. UreG subfamily. In terms of assembly, homodimer. UreD, UreF and UreG form a complex that acts as a GTP-hydrolysis-dependent molecular chaperone, activating the urease apoprotein by helping to assemble the nickel containing metallocenter of UreC. The UreE protein probably delivers the nickel.

It is found in the cytoplasm. Functionally, facilitates the functional incorporation of the urease nickel metallocenter. This process requires GTP hydrolysis, probably effectuated by UreG. This chain is Urease accessory protein UreG, found in Pseudomonas paraeruginosa (strain DSM 24068 / PA7) (Pseudomonas aeruginosa (strain PA7)).